A 77-amino-acid chain; its full sequence is Conotoxin Vc6c (77 aa).

The first 22 residues, 1–22 (MKLTCMVIVAVLFLTANTFVTA), serve as a signal peptide directing secretion. A propeptide spanning residues 23–51 (DDSGNGLENLFSKAHHEIKNPEASNLNKR) is cleaved from the precursor. Cystine bridges form between C52/C67, C59/C71, and C66/C76.

In terms of tissue distribution, expressed by the venom duct.

Its subcellular location is the secreted. In Conus victoriae (Queen Victoria cone), this protein is Conotoxin Vc6c.